Consider the following 102-residue polypeptide: UPF0473 protein SERP1179 (102 aa).

The protein belongs to the UPF0473 family.

The protein is UPF0473 protein SERP1179 of Staphylococcus epidermidis (strain ATCC 35984 / DSM 28319 / BCRC 17069 / CCUG 31568 / BM 3577 / RP62A).